The chain runs to 42 residues: Conotoxin Au11.6 (42 aa).

Intrachain disulfides connect Cys6–Cys20, Cys13–Cys25, Cys19–Cys30, and Cys24–Cys37.

The protein belongs to the conotoxin I1 superfamily. In terms of tissue distribution, expressed by the venom duct.

It is found in the secreted. The polypeptide is Conotoxin Au11.6 (Conus aulicus (Princely cone)).